The primary structure comprises 134 residues: Small ribosomal subunit protein uS11 (134 aa).

The interval 114 to 134 (DVTPVPSDSTRRKGGRRGRRL) is disordered. Over residues 125 to 134 (RKGGRRGRRL) the composition is skewed to basic residues.

This sequence belongs to the universal ribosomal protein uS11 family.

This is Small ribosomal subunit protein uS11 (RPS14) from Candida albicans (Yeast).